Here is a 307-residue protein sequence, read N- to C-terminus: Elongation factor Ts (307 aa).

An involved in Mg(2+) ion dislocation from EF-Tu region spans residues 80–83 (TDFV).

The protein belongs to the EF-Ts family.

It is found in the cytoplasm. In terms of biological role, associates with the EF-Tu.GDP complex and induces the exchange of GDP to GTP. It remains bound to the aminoacyl-tRNA.EF-Tu.GTP complex up to the GTP hydrolysis stage on the ribosome. The protein is Elongation factor Ts of Azorhizobium caulinodans (strain ATCC 43989 / DSM 5975 / JCM 20966 / LMG 6465 / NBRC 14845 / NCIMB 13405 / ORS 571).